A 528-amino-acid chain; its full sequence is Glutamyl-tRNA(Gln) amidotransferase subunit A, mitochondrial (528 aa).

K76 serves as the catalytic Charge relay system. The tract at residues 148–167 (YREKRKQNPHSENEDSDWLI) is disordered. The Charge relay system role is filled by S171. The Acyl-ester intermediate role is filled by S195.

Belongs to the amidase family. GatA subfamily. Subunit of the heterotrimeric GatCAB amidotransferase (AdT) complex, composed of A (QRSL1), B (GATB) and C (GATC) subunits.

The protein localises to the mitochondrion. It catalyses the reaction L-glutamyl-tRNA(Gln) + L-glutamine + ATP + H2O = L-glutaminyl-tRNA(Gln) + L-glutamate + ADP + phosphate + H(+). In terms of biological role, allows the formation of correctly charged Gln-tRNA(Gln) through the transamidation of misacylated Glu-tRNA(Gln) in the mitochondria. The reaction takes place in the presence of glutamine and ATP through an activated gamma-phospho-Glu-tRNA(Gln). This is Glutamyl-tRNA(Gln) amidotransferase subunit A, mitochondrial from Homo sapiens (Human).